Reading from the N-terminus, the 564-residue chain is Threonine--tRNA ligase (564 aa).

The tract at residues 167–464 (DHRAIGKRLE…LLEKTHGNLP (298 aa)) is catalytic. Residues cysteine 260, histidine 311, and histidine 441 each contribute to the Zn(2+) site.

It belongs to the class-II aminoacyl-tRNA synthetase family. In terms of assembly, homodimer. The cofactor is Zn(2+).

It localises to the cytoplasm. It catalyses the reaction tRNA(Thr) + L-threonine + ATP = L-threonyl-tRNA(Thr) + AMP + diphosphate + H(+). Functionally, catalyzes the attachment of threonine to tRNA(Thr) in a two-step reaction: L-threonine is first activated by ATP to form Thr-AMP and then transferred to the acceptor end of tRNA(Thr). Also edits incorrectly charged L-seryl-tRNA(Thr). This chain is Threonine--tRNA ligase, found in Mycoplasma pneumoniae (strain ATCC 29342 / M129 / Subtype 1) (Mycoplasmoides pneumoniae).